Reading from the N-terminus, the 427-residue chain is CCA-adding enzyme (427 aa).

ATP-binding residues include serine 50 and lysine 53. CTP-binding residues include serine 50 and lysine 53. Mg(2+) contacts are provided by aspartate 61, aspartate 63, and aspartate 112. ATP is bound by residues histidine 135, lysine 155, and tyrosine 164. CTP contacts are provided by histidine 135, lysine 155, and tyrosine 164.

It belongs to the tRNA nucleotidyltransferase/poly(A) polymerase family. Archaeal CCA-adding enzyme subfamily. Homodimer. Requires Mg(2+) as cofactor.

It catalyses the reaction a tRNA precursor + 2 CTP + ATP = a tRNA with a 3' CCA end + 3 diphosphate. It carries out the reaction a tRNA with a 3' CCA end + 2 CTP + ATP = a tRNA with a 3' CCACCA end + 3 diphosphate. Catalyzes the addition and repair of the essential 3'-terminal CCA sequence in tRNAs without using a nucleic acid template. Adds these three nucleotides in the order of C, C, and A to the tRNA nucleotide-73, using CTP and ATP as substrates and producing inorganic pyrophosphate. tRNA 3'-terminal CCA addition is required both for tRNA processing and repair. Also involved in tRNA surveillance by mediating tandem CCA addition to generate a CCACCA at the 3' terminus of unstable tRNAs. While stable tRNAs receive only 3'-terminal CCA, unstable tRNAs are marked with CCACCA and rapidly degraded. This Picrophilus torridus (strain ATCC 700027 / DSM 9790 / JCM 10055 / NBRC 100828 / KAW 2/3) protein is CCA-adding enzyme.